Here is a 104-residue protein sequence, read N- to C-terminus: uncharacterized protein (104 aa).

2 consecutive transmembrane segments (helical) span residues 45-65 (LYGI…IGVF) and 70-90 (LYLS…AKGL).

It is found in the membrane. This is an uncharacterized protein from Saccharomyces cerevisiae (strain ATCC 204508 / S288c) (Baker's yeast).